Here is a 312-residue protein sequence, read N- to C-terminus: uncharacterized protein (312 aa).

The N-terminal stretch at 1–28 is a signal peptide; sequence MNSADTQEPKSFNHTDMWTAFGTTMSGA.

The FAS-operon encodes genes involved in cytokinin production and in host plant fasciation (leafy gall). This is an uncharacterized protein from Rhodococcoides fascians (Rhodococcus fascians).